The chain runs to 77 residues: Defensin-like protein 91 (77 aa).

An N-terminal signal peptide occupies residues 1–27 (METKKISYFLLPSLMIVALIFQPMCSA). Intrachain disulfides connect cysteine 38/cysteine 75, cysteine 43/cysteine 64, cysteine 49/cysteine 73, and cysteine 53/cysteine 74.

It belongs to the DEFL family.

Its subcellular location is the secreted. The chain is Defensin-like protein 91 (LCR47) from Arabidopsis thaliana (Mouse-ear cress).